The primary structure comprises 382 residues: Lipoyl synthase, mitochondrial (382 aa).

A mitochondrion-targeting transit peptide spans 1–30; that stretch reads MHGRRHLAASLARALTYAPSRSISSTPSLL. The span at 25-34 shows a compositional bias: polar residues; sequence STPSLLQTLD. The segment at 25 to 46 is disordered; the sequence is STPSLLQTLDPSTPSPAAAPPT. 7 residues coordinate [4Fe-4S] cluster: cysteine 112, cysteine 117, cysteine 123, cysteine 143, cysteine 147, cysteine 150, and serine 359. Residues 128-348 form the Radical SAM core domain; it reads ETGTATATIM…RSLGVDMGFR (221 aa).

The protein belongs to the radical SAM superfamily. Lipoyl synthase family. [4Fe-4S] cluster is required as a cofactor.

The protein resides in the mitochondrion. It catalyses the reaction [[Fe-S] cluster scaffold protein carrying a second [4Fe-4S](2+) cluster] + N(6)-octanoyl-L-lysyl-[protein] + 2 oxidized [2Fe-2S]-[ferredoxin] + 2 S-adenosyl-L-methionine + 4 H(+) = [[Fe-S] cluster scaffold protein] + N(6)-[(R)-dihydrolipoyl]-L-lysyl-[protein] + 4 Fe(3+) + 2 hydrogen sulfide + 2 5'-deoxyadenosine + 2 L-methionine + 2 reduced [2Fe-2S]-[ferredoxin]. Its pathway is protein modification; protein lipoylation via endogenous pathway; protein N(6)-(lipoyl)lysine from octanoyl-[acyl-carrier-protein]: step 2/2. Catalyzes the radical-mediated insertion of two sulfur atoms into the C-6 and C-8 positions of the octanoyl moiety bound to the lipoyl domains of lipoate-dependent enzymes, thereby converting the octanoylated domains into lipoylated derivatives. In Oryza sativa subsp. japonica (Rice), this protein is Lipoyl synthase, mitochondrial.